The sequence spans 258 residues: Imidazole glycerol phosphate synthase subunit HisF (258 aa).

Catalysis depends on residues aspartate 11 and aspartate 130.

The protein belongs to the HisA/HisF family. In terms of assembly, heterodimer of HisH and HisF.

It is found in the cytoplasm. It carries out the reaction 5-[(5-phospho-1-deoxy-D-ribulos-1-ylimino)methylamino]-1-(5-phospho-beta-D-ribosyl)imidazole-4-carboxamide + L-glutamine = D-erythro-1-(imidazol-4-yl)glycerol 3-phosphate + 5-amino-1-(5-phospho-beta-D-ribosyl)imidazole-4-carboxamide + L-glutamate + H(+). The protein operates within amino-acid biosynthesis; L-histidine biosynthesis; L-histidine from 5-phospho-alpha-D-ribose 1-diphosphate: step 5/9. IGPS catalyzes the conversion of PRFAR and glutamine to IGP, AICAR and glutamate. The HisF subunit catalyzes the cyclization activity that produces IGP and AICAR from PRFAR using the ammonia provided by the HisH subunit. The protein is Imidazole glycerol phosphate synthase subunit HisF of Methylorubrum extorquens (strain CM4 / NCIMB 13688) (Methylobacterium extorquens).